We begin with the raw amino-acid sequence, 21 residues long: Testis ecdysiotropin peptide 1 (21 aa).

The segment at 1 to 21 is disordered; that stretch reads ISDFDEYEPLNDADNNEVLDF.

Functionally, start or boost ecdysteroid synthesis in testis of larvae and pupae. The sequence is that of Testis ecdysiotropin peptide 1 from Lymantria dispar (Gypsy moth).